The sequence spans 313 residues: Mitochondrial uncoupling protein 5 (313 aa).

Solcar repeat units follow at residues 4-108 (KGFA…IKGE), 117-208 (MPLM…VKET), and 217-307 (DGLG…VKKL). 6 helical membrane-spanning segments follow: residues 6-26 (FAEG…LDLI), 77-97 (MRAL…YSTT), 123-143 (IGAG…ADVA), 182-202 (RGSS…LASY), 223-243 (VSAS…VDVI), and 280-300 (YKGF…LFVT).

This sequence belongs to the mitochondrial carrier (TC 2.A.29) family. As to expression, expressed in roots, leaves, stems and flowers.

The protein localises to the mitochondrion inner membrane. Its function is as follows. PUMPS are mitochondrial transporter proteins that create proton leaks across the inner mitochondrial membrane, thus uncoupling oxidative phosphorylation. This leads to a decrease in the efficiency of oxidative phosphorylation and an increase in heat production. May be involved in protecting plant cells against oxidative stress damage. Recombinant PUMP5, reconstituted into liposomes, transports a wide range of dicarboxylic acids including malate, oxaloacetate and succinate as well as phosphate, sulfate and thiosulfate. However, it is unknown if these transports are of any biological significance in vivo. In Arabidopsis thaliana (Mouse-ear cress), this protein is Mitochondrial uncoupling protein 5 (PUMP5).